A 456-amino-acid polypeptide reads, in one-letter code: GTPase Der (456 aa).

EngA-type G domains follow at residues Pro-4–Asp-169 and Val-178–Arg-353. Residues Gly-10 to Ser-17, Asp-57 to Leu-61, Asn-120 to Glu-123, Gly-184 to Ser-191, Asp-231 to Ile-235, and Asn-296 to Asp-299 each bind GTP. Residues Arg-354–Gln-439 enclose the KH-like domain.

Belongs to the TRAFAC class TrmE-Era-EngA-EngB-Septin-like GTPase superfamily. EngA (Der) GTPase family. In terms of assembly, associates with the 50S ribosomal subunit.

Functionally, GTPase that plays an essential role in the late steps of ribosome biogenesis. This Prochlorococcus marinus (strain NATL1A) protein is GTPase Der.